Reading from the N-terminus, the 298-residue chain is Tyrosine recombinase XerC (298 aa).

A Core-binding (CB) domain is found at 2–88; the sequence is TDLHTDVERY…ALRSFFDWLV (87 aa). The 180-residue stretch at 109 to 288 folds into the Tyr recombinase domain; it reads HLPKNIDVDD…DFQHLASVYD (180 aa). Active-site residues include R148, K172, H240, R243, and H266. The O-(3'-phospho-DNA)-tyrosine intermediate role is filled by Y275.

This sequence belongs to the 'phage' integrase family. XerC subfamily. In terms of assembly, forms a cyclic heterotetrameric complex composed of two molecules of XerC and two molecules of XerD, in which XerC interacts with XerD via its C-terminal region, XerD interacts with XerC via its C-terminal region and so on.

It localises to the cytoplasm. With respect to regulation, ftsK may regulate the catalytic switch between XerC and XerD in the heterotetrameric complex during the two steps of the recombination process. In terms of biological role, site-specific tyrosine recombinase, which acts by catalyzing the cutting and rejoining of the recombining DNA molecules. Binds cooperatively to specific DNA consensus sequences that are separated from XerD binding sites by a short central region, forming the heterotetrameric XerC-XerD complex that recombines DNA substrates. The complex is essential to convert dimers of the bacterial chromosome into monomers to permit their segregation at cell division. It also contributes to the segregational stability of plasmids. In the complex XerC specifically exchanges the top DNA strands. The chain is Tyrosine recombinase XerC from Escherichia coli O45:K1 (strain S88 / ExPEC).